Consider the following 154-residue polypeptide: NADPH-dependent 7-cyano-7-deazaguanine reductase (154 aa).

The active-site Thioimide intermediate is Cys52. The active-site Proton donor is the Asp59. Residues 74-76 (VES) and 93-94 (HE) contribute to the substrate site.

The protein belongs to the GTP cyclohydrolase I family. QueF type 1 subfamily.

It is found in the cytoplasm. It catalyses the reaction 7-aminomethyl-7-carbaguanine + 2 NADP(+) = 7-cyano-7-deazaguanine + 2 NADPH + 3 H(+). It functions in the pathway tRNA modification; tRNA-queuosine biosynthesis. Functionally, catalyzes the NADPH-dependent reduction of 7-cyano-7-deazaguanine (preQ0) to 7-aminomethyl-7-deazaguanine (preQ1). In Paracoccus denitrificans (strain Pd 1222), this protein is NADPH-dependent 7-cyano-7-deazaguanine reductase.